The primary structure comprises 247 residues: tRNA (guanine-N(1)-)-methyltransferase (247 aa).

S-adenosyl-L-methionine is bound by residues Gly-115 and 134–139; that span reads IGDFVL.

The protein belongs to the RNA methyltransferase TrmD family. Homodimer.

It localises to the cytoplasm. It carries out the reaction guanosine(37) in tRNA + S-adenosyl-L-methionine = N(1)-methylguanosine(37) in tRNA + S-adenosyl-L-homocysteine + H(+). Functionally, specifically methylates guanosine-37 in various tRNAs. The protein is tRNA (guanine-N(1)-)-methyltransferase of Anaeromyxobacter sp. (strain K).